Reading from the N-terminus, the 721-residue chain is Ophiobolin F synthase oblA (721 aa).

Positions 5-325 (YDQPYSVLLD…RYNLKAEWNE (321 aa)) are (7Z)-ophiobola-7,19-dien-3-ol synthase. Mg(2+) contacts are provided by Asp97 and Asp101. Asp97 is a substrate binding site. Residues 97–101 (DDVID) carry the DDXXD 1 motif. Substrate-binding positions include 185 to 188 (RSLD), Asn229, 233 to 237 (SFEKE), and 316 to 317 (RY). The NSE/DTE motif lies at 229 to 237 (NDLFSFEKE). The tract at residues 326–721 (LQMLRAKHGV…LRLMMEMLKV (396 aa)) is geranylfarnesyl diphosphate synthase. A disordered region spans residues 348-387 (SMDHIWKKGSTQGESKGEKRKRQSVNGTNGVNGTNGVKKP). The segment covering 372 to 384 (VNGTNGVNGTNGV) has biased composition (low complexity). The isopentenyl diphosphate site is built by Lys432, Arg435, and His464. Positions 471 and 475 each coordinate Mg(2+). The DDXXD 2 signature appears at 471-475 (DDLED). Arg480 contacts dimethylallyl diphosphate. Arg481 provides a ligand contact to isopentenyl diphosphate. Dimethylallyl diphosphate is bound by residues Lys558, Thr559, Gln597, Asn604, Lys614, and Lys624.

The protein in the N-terminal section; belongs to the terpene synthase family. It in the C-terminal section; belongs to the FPP/GGPP synthase family. Requires Mg(2+) as cofactor.

The enzyme catalyses isopentenyl diphosphate + (2E,6E)-farnesyl diphosphate = (2E,6E,10E)-geranylgeranyl diphosphate + diphosphate. It carries out the reaction isopentenyl diphosphate + (2E,6E,10E)-geranylgeranyl diphosphate = (2E,6E,10E,14E)-geranylfarnesyl diphosphate + diphosphate. The catalysed reaction is (2E,6E,10E,14E)-geranylfarnesyl diphosphate + H2O = ophiobolin F + diphosphate. The protein operates within secondary metabolite biosynthesis; terpenoid biosynthesis. Its function is as follows. Bifunctional sesterterpene synthase; part of the gene cluster that mediates the biosynthesis of the sesterterpenes ophiobolins, fungal phytotoxins with potential anti-cancer activities. The first step of the pathway is performed by the sesterterpene synthase oblA that possesses both prenyl transferase and terpene cyclase activity, converting isopentenyl diphosphate and dimethylallyl diphosphate into geranylfarnesyl diphosphate (GFPP) and further converting GFPP into ophiobolin F, respectively. Other sesterterpenoids (C(25) terpenoids) are found as minor products of oblA. The cytochrome P450 monooxygenase oblB then catalyzes a four-step oxidative transformation of ophiobolin F to yield ophiobolin C. The FAD-dependent oxidoreductase oblC might be involved in a later oxidation step that produces ophiobolin A. The polypeptide is Ophiobolin F synthase oblA (Cochliobolus heterostrophus (strain C5 / ATCC 48332 / race O) (Southern corn leaf blight fungus)).